The primary structure comprises 230 residues: Ribosomal RNA small subunit methyltransferase G (230 aa).

S-adenosyl-L-methionine contacts are provided by residues glycine 93, leucine 98, 144-145, and arginine 158; that span reads IE.

It belongs to the methyltransferase superfamily. RNA methyltransferase RsmG family.

It localises to the cytoplasm. It carries out the reaction guanosine(527) in 16S rRNA + S-adenosyl-L-methionine = N(7)-methylguanosine(527) in 16S rRNA + S-adenosyl-L-homocysteine. In terms of biological role, specifically methylates the N7 position of guanine in position 527 of 16S rRNA. In Bordetella parapertussis (strain 12822 / ATCC BAA-587 / NCTC 13253), this protein is Ribosomal RNA small subunit methyltransferase G.